Consider the following 280-residue polypeptide: Urease accessory protein UreD (280 aa).

Belongs to the UreD family. In terms of assembly, ureD, UreF and UreG form a complex that acts as a GTP-hydrolysis-dependent molecular chaperone, activating the urease apoprotein by helping to assemble the nickel containing metallocenter of UreC. The UreE protein probably delivers the nickel.

The protein localises to the cytoplasm. Its function is as follows. Required for maturation of urease via the functional incorporation of the urease nickel metallocenter. This is Urease accessory protein UreD from Vibrio parahaemolyticus.